Consider the following 859-residue polypeptide: Leucine--tRNA ligase (859 aa).

Positions 42–52 (PYPSGRLHMGH) match the 'HIGH' region motif. The 'KMSKS' region motif lies at 618 to 622 (KMSKS). An ATP-binding site is contributed by K621.

This sequence belongs to the class-I aminoacyl-tRNA synthetase family.

The protein resides in the cytoplasm. The catalysed reaction is tRNA(Leu) + L-leucine + ATP = L-leucyl-tRNA(Leu) + AMP + diphosphate. This Shewanella pealeana (strain ATCC 700345 / ANG-SQ1) protein is Leucine--tRNA ligase.